The chain runs to 385 residues: 1-deoxy-D-xylulose 5-phosphate reductoisomerase (385 aa).

Positions 10, 11, 12, 13, 36, 38, and 122 each coordinate NADPH. Lysine 123 lines the 1-deoxy-D-xylulose 5-phosphate pocket. Glutamate 124 is a binding site for NADPH. Aspartate 148 provides a ligand contact to Mn(2+). Residues serine 149, glutamate 150, serine 174, and histidine 197 each contribute to the 1-deoxy-D-xylulose 5-phosphate site. Glutamate 150 contributes to the Mn(2+) binding site. Glycine 203 contacts NADPH. The 1-deoxy-D-xylulose 5-phosphate site is built by serine 210, asparagine 215, lysine 216, and glutamate 219. Glutamate 219 provides a ligand contact to Mn(2+).

This sequence belongs to the DXR family. The cofactor is Mg(2+). It depends on Mn(2+) as a cofactor.

It catalyses the reaction 2-C-methyl-D-erythritol 4-phosphate + NADP(+) = 1-deoxy-D-xylulose 5-phosphate + NADPH + H(+). It functions in the pathway isoprenoid biosynthesis; isopentenyl diphosphate biosynthesis via DXP pathway; isopentenyl diphosphate from 1-deoxy-D-xylulose 5-phosphate: step 1/6. Functionally, catalyzes the NADPH-dependent rearrangement and reduction of 1-deoxy-D-xylulose-5-phosphate (DXP) to 2-C-methyl-D-erythritol 4-phosphate (MEP). This is 1-deoxy-D-xylulose 5-phosphate reductoisomerase from Citrifermentans bemidjiense (strain ATCC BAA-1014 / DSM 16622 / JCM 12645 / Bem) (Geobacter bemidjiensis).